A 324-amino-acid polypeptide reads, in one-letter code: UDP-N-acetylenolpyruvoylglucosamine reductase (324 aa).

In terms of domain architecture, FAD-binding PCMH-type spans 36–203 (FRAGGLAELM…TSVLFEGYPE (168 aa)). Arg-183 is an active-site residue. Ser-232 functions as the Proton donor in the catalytic mechanism. Glu-302 is a catalytic residue.

Belongs to the MurB family. It depends on FAD as a cofactor.

The protein resides in the cytoplasm. It carries out the reaction UDP-N-acetyl-alpha-D-muramate + NADP(+) = UDP-N-acetyl-3-O-(1-carboxyvinyl)-alpha-D-glucosamine + NADPH + H(+). The protein operates within cell wall biogenesis; peptidoglycan biosynthesis. Cell wall formation. This chain is UDP-N-acetylenolpyruvoylglucosamine reductase, found in Rhizobium etli (strain CIAT 652).